We begin with the raw amino-acid sequence, 98 residues long: MARPKIPRRIECHPPASCFKPNGVPIRQLARVELAPDELEALRLVDQLGLQQQQAALQMQVSRQTLANLVKAARFKVVDCLLHQKALYIQAIDNKSSD.

The protein belongs to the UPF0251 family.

The protein is UPF0251 protein VC0395_0048/VC395_A0084 of Vibrio cholerae serotype O1 (strain ATCC 39541 / Classical Ogawa 395 / O395).